The chain runs to 396 residues: S-adenosylmethionine synthase 1 (396 aa).

A Mg(2+)-binding site is contributed by Glu-13. Residue His-19 participates in ATP binding. Glu-47 contacts K(+). L-methionine contacts are provided by Glu-60 and Gln-103. ATP is bound by residues Asp-171 to Lys-173, Ser-239 to Phe-242, Asp-250, Arg-256 to Lys-257, Ala-273, Lys-277, and Lys-281. Asp-250 is an L-methionine binding site. Lys-281 provides a ligand contact to L-methionine.

It belongs to the AdoMet synthase family. In terms of assembly, homotetramer. Requires Mn(2+) as cofactor. The cofactor is Mg(2+). It depends on Co(2+) as a cofactor. K(+) serves as cofactor.

Its subcellular location is the cytoplasm. The catalysed reaction is L-methionine + ATP + H2O = S-adenosyl-L-methionine + phosphate + diphosphate. Its pathway is amino-acid biosynthesis; S-adenosyl-L-methionine biosynthesis; S-adenosyl-L-methionine from L-methionine: step 1/1. Catalyzes the formation of S-adenosylmethionine from methionine and ATP. The reaction comprises two steps that are both catalyzed by the same enzyme: formation of S-adenosylmethionine (AdoMet) and triphosphate, and subsequent hydrolysis of the triphosphate. May be involved in the synthesis of betain in response to abiotic stress such as high salinity. In Beta vulgaris (Sugar beet), this protein is S-adenosylmethionine synthase 1 (SAMS1).